Here is a 230-residue protein sequence, read N- to C-terminus: Ribose-5-phosphate isomerase A (230 aa).

Substrate is bound by residues 29 to 32 (SGST), 86 to 89 (DGAD), and 99 to 102 (KGGG). Glu-108 acts as the Proton acceptor in catalysis. Lys-126 serves as a coordination point for substrate.

It belongs to the ribose 5-phosphate isomerase family. In terms of assembly, homodimer.

It carries out the reaction aldehydo-D-ribose 5-phosphate = D-ribulose 5-phosphate. Its pathway is carbohydrate degradation; pentose phosphate pathway; D-ribose 5-phosphate from D-ribulose 5-phosphate (non-oxidative stage): step 1/1. In terms of biological role, catalyzes the reversible conversion of ribose-5-phosphate to ribulose 5-phosphate. The sequence is that of Ribose-5-phosphate isomerase A from Desulfatibacillum aliphaticivorans.